Reading from the N-terminus, the 292-residue chain is Protoheme IX farnesyltransferase (292 aa).

The next 9 helical transmembrane spans lie at 11–31, 37–57, 85–105, 108–128, 133–153, 163–183, 199–219, 223–243, and 261–281; these read FGIV…GFQI, WKIF…SLAL, AAAG…LFKL, VAGW…TLWW, VFAA…GYAV, SLYL…VLAI, VALG…VYVG, AAPM…PFVF, and WLAF…IPVI.

It belongs to the UbiA prenyltransferase family. Protoheme IX farnesyltransferase subfamily.

It is found in the cell inner membrane. It carries out the reaction heme b + (2E,6E)-farnesyl diphosphate + H2O = Fe(II)-heme o + diphosphate. It functions in the pathway porphyrin-containing compound metabolism; heme O biosynthesis; heme O from protoheme: step 1/1. Its function is as follows. Converts heme B (protoheme IX) to heme O by substitution of the vinyl group on carbon 2 of heme B porphyrin ring with a hydroxyethyl farnesyl side group. This Bdellovibrio bacteriovorus (strain ATCC 15356 / DSM 50701 / NCIMB 9529 / HD100) protein is Protoheme IX farnesyltransferase.